A 423-amino-acid chain; its full sequence is MAGKVKWVTDIEKSVLINNFEKRGWVQVTENEDWNFYWMSVQTIRNVFSVETGYRLSDDQIVNHFPNHYELTRKDLMVKNIKRYRKELEKEGSPLAEKDESGKYLYLDFVPVTYMLPADYNLFVEEFRKSPSSTWIMKPCGKAQGKGIFLINKLSQIKKWSRDSKTSSFVTQSTKEAYVISLYINNPLLIGGRKFDLRLYVLVSTYRPLRCYMYKLGFCRFCTVKYTPSTSELDNMFVHLTNVAIQKHGEDYNHIHGGKWTVNNLRLYLESTRGKEVTSKLFDEIHWIIVQSLKAVAPVMNNDKHCFECYGYDIIIDDKLKPWLIEVNASPSLTSSTANDRILKYNLINDTLNIAVPNGEIPDCKWNKSPPKEVLGNYEILYDEELAQGDGAERELRSRPGQSLGPKGSRLRDAGRTVLTTWK.

One can recognise a TTL domain in the interval 1–367; it reads MAGKVKWVTD…NGEIPDCKWN (367 aa). Residues K138, 144–145, 181–184, and 194–196 each bind ATP; these read QG, SLYI, and KFD. Q144 contributes to the a protein binding site. R220 lines the L-glutamate pocket. 241-242 contributes to the ATP binding site; that stretch reads TN. L-glutamate is bound at residue K259. Positions 313, 326, and 328 each coordinate Mg(2+). L-glutamate is bound at residue K344. Residues 391 to 423 form a disordered region; sequence GAERELRSRPGQSLGPKGSRLRDAGRTVLTTWK.

Belongs to the tubulin polyglutamylase family. In terms of assembly, part of the neuronal tubulin polyglutamylase complex which contains TPGS1, TPGS2, TTLL1, LRRC49 and NICN1. Interacts with PCM1, CSTPP1 and LRRC49. Mg(2+) serves as cofactor.

The protein localises to the cytoplasm. Its subcellular location is the cytoskeleton. The protein resides in the cilium basal body. It is found in the cilium axoneme. It localises to the cell projection. The protein localises to the cilium. Its subcellular location is the flagellum. The enzyme catalyses (L-glutamyl)(n)-gamma-L-glutamyl-L-glutamyl-[protein] + L-glutamate + ATP = (L-glutamyl)(n+1)-gamma-L-glutamyl-L-glutamyl-[protein] + ADP + phosphate + H(+). Its function is as follows. Catalytic subunit of a polyglutamylase complex which modifies tubulin, generating side chains of glutamate on the gamma-carboxyl group of specific glutamate residues within the C-terminal tail of tubulin. Probably involved in the side-chain elongation step of the polyglutamylation reaction rather than the initiation step. Modifies both alpha- and beta-tubulins with a preference for the alpha-tail. Unlike most polyglutamylases of the tubulin--tyrosine ligase family, only displays a catalytic activity when in complex with other proteins as it is most likely lacking domains important for autonomous activity. Part of the neuronal tubulin polyglutamylase complex. Mediates cilia and flagella polyglutamylation which is essential for their biogenesis and motility. Involved in respiratory motile cilia function through the regulation of beating asymmetry. Essential for sperm flagella biogenesis, motility and male fertility. Involved in KLF4 glutamylation which impedes its ubiquitination, thereby leading to somatic cell reprogramming, pluripotency maintenance and embryogenesis. The chain is Polyglutamylase complex subunit TTLL1 (TTLL1) from Bos taurus (Bovine).